A 264-amino-acid polypeptide reads, in one-letter code: Meiotically up-regulated gene 162 protein (264 aa).

7 helical membrane-spanning segments follow: residues 18-38, 54-74, 84-104, 140-160, 174-194, 199-219, and 223-243; these read IVIF…WNLK, LWIY…AGSA, VFQV…GYSF, IISI…LLFL, HLSY…IKLI, FVLG…SLIT, and LISY…IWIY.

It is found in the endoplasmic reticulum membrane. Functionally, has a role in meiosis. The sequence is that of Meiotically up-regulated gene 162 protein (mug162) from Schizosaccharomyces pombe (strain 972 / ATCC 24843) (Fission yeast).